The following is a 429-amino-acid chain: Hydrogenobyrinate a,c-diamide synthase (429 aa).

The region spanning R240–E429 is the GATase cobBQ-type domain. C323 acts as the Nucleophile in catalysis.

This sequence belongs to the CobB/CbiA family. The cofactor is Mg(2+).

The catalysed reaction is hydrogenobyrinate + 2 L-glutamine + 2 ATP + 2 H2O = hydrogenobyrinate a,c-diamide + 2 L-glutamate + 2 ADP + 2 phosphate + 2 H(+). It participates in cofactor biosynthesis; adenosylcobalamin biosynthesis; cob(II)yrinate a,c-diamide from precorrin-2 (aerobic route): step 9/10. Catalyzes the ATP-dependent amidation of the two carboxylate groups at positions a and c of hydrogenobyrinate, using either L-glutamine or ammonia as the nitrogen source. The polypeptide is Hydrogenobyrinate a,c-diamide synthase (Rhizobium meliloti (strain 1021) (Ensifer meliloti)).